The sequence spans 159 residues: Phosphodiesterase delta-like protein (159 aa).

The protein belongs to the PDE6D/unc-119 family.

The protein is Phosphodiesterase delta-like protein (pdl-1) of Caenorhabditis elegans.